Consider the following 63-residue polypeptide: MRIHYLLFAFLLVLLSPPAAFSKKINNPVSCLRKGGRCWNRCIGNTRQIGSCGVPFLKCCKRK.

A signal peptide spans methionine 1–alanine 20. A propeptide spanning residues phenylalanine 21–serine 22 is cleaved from the precursor. 3 disulfides stabilise this stretch: cysteine 31–cysteine 59, cysteine 38–cysteine 52, and cysteine 42–cysteine 60.

This sequence belongs to the beta-defensin family. LAP/TAP subfamily. In terms of tissue distribution, highest expression in salivary glands, epididymis, ovary and pancreas and to a lesser extent in lung, liver and brain. Low or no expression in skeletal muscle and tongue.

The protein localises to the secreted. Antimicrobial activity against Gram-negative bacteria E.coli and P.aeruginosa. This chain is Beta-defensin 3 (Defb3), found in Mus musculus (Mouse).